Here is an 83-residue protein sequence, read N- to C-terminus: Small ribosomal subunit protein uS17 (83 aa).

This sequence belongs to the universal ribosomal protein uS17 family. Part of the 30S ribosomal subunit.

Functionally, one of the primary rRNA binding proteins, it binds specifically to the 5'-end of 16S ribosomal RNA. This chain is Small ribosomal subunit protein uS17, found in Chlamydia abortus (strain DSM 27085 / S26/3) (Chlamydophila abortus).